A 71-amino-acid chain; its full sequence is Immune-induced peptide 18 (71 aa).

Residues 1–24 (MKLIALCCLLLLGLLGFLAAPGVA) form the signal peptide. The propeptide occupies 25–26 (SP). Residues 26–71 (PSRHTGPGNGSGSGAGSGNPFRSPSSQQRPLYYDAPIGKPSKTMYA) form a disordered region. Gly residues predominate over residues 32-42 (PGNGSGSGAGS).

Hemolymph (at protein level).

Its subcellular location is the secreted. The chain is Immune-induced peptide 18 (IM18) from Drosophila melanogaster (Fruit fly).